Consider the following 130-residue polypeptide: Large ribosomal subunit protein eL34 (130 aa).

The segment at 111–130 (KPVSKPPKIQKTAKAASKSK) is disordered.

Belongs to the eukaryotic ribosomal protein eL34 family.

This Aedes albopictus (Asian tiger mosquito) protein is Large ribosomal subunit protein eL34 (RpL34).